We begin with the raw amino-acid sequence, 235 residues long: Bypass of stop codon protein 2 (235 aa).

Residues 68–88 form a helical membrane-spanning segment; the sequence is FGIFQLMCSLGVIVLLLPIII. The residue at position 177 (serine 177) is a Phosphoserine.

Its subcellular location is the lipid droplet. The protein localises to the membrane. In Saccharomyces cerevisiae (strain ATCC 204508 / S288c) (Baker's yeast), this protein is Bypass of stop codon protein 2 (BSC2).